Consider the following 196-residue polypeptide: Small ribosomal subunit protein uS4c (196 aa).

The segment at G16–F36 is disordered. The S4 RNA-binding domain maps to M89–L169.

It belongs to the universal ribosomal protein uS4 family. In terms of assembly, part of the 30S ribosomal subunit. Contacts protein S5. The interaction surface between S4 and S5 is involved in control of translational fidelity.

The protein localises to the plastid. It is found in the chloroplast. Its function is as follows. One of the primary rRNA binding proteins, it binds directly to 16S rRNA where it nucleates assembly of the body of the 30S subunit. With S5 and S12 plays an important role in translational accuracy. The sequence is that of Small ribosomal subunit protein uS4c (rps4) from Cinna latifolia (Drooping woodreed).